The primary structure comprises 142 residues: Nucleoside diphosphate kinase (142 aa).

6 residues coordinate ATP: Lys-11, Phe-59, Arg-87, Thr-93, Arg-104, and Asn-114. Residue His-117 is the Pros-phosphohistidine intermediate of the active site.

It belongs to the NDK family. As to quaternary structure, homotetramer. The cofactor is Mg(2+).

Its subcellular location is the cytoplasm. The enzyme catalyses a 2'-deoxyribonucleoside 5'-diphosphate + ATP = a 2'-deoxyribonucleoside 5'-triphosphate + ADP. It carries out the reaction a ribonucleoside 5'-diphosphate + ATP = a ribonucleoside 5'-triphosphate + ADP. In terms of biological role, major role in the synthesis of nucleoside triphosphates other than ATP. The ATP gamma phosphate is transferred to the NDP beta phosphate via a ping-pong mechanism, using a phosphorylated active-site intermediate. In Aeromonas hydrophila subsp. hydrophila (strain ATCC 7966 / DSM 30187 / BCRC 13018 / CCUG 14551 / JCM 1027 / KCTC 2358 / NCIMB 9240 / NCTC 8049), this protein is Nucleoside diphosphate kinase.